Here is a 311-residue protein sequence, read N- to C-terminus: Malate dehydrogenase (311 aa).

NAD(+) contacts are provided by residues 7-13 (GAAGGIG) and Asp34. Substrate is bound by residues Arg81 and Arg87. NAD(+) contacts are provided by residues Asn94 and 117 to 119 (ITN). Substrate is bound by residues Asn119 and Arg153. His177 (proton acceptor) is an active-site residue. Met227 serves as a coordination point for NAD(+).

This sequence belongs to the LDH/MDH superfamily. MDH type 1 family. In terms of assembly, homodimer.

The catalysed reaction is (S)-malate + NAD(+) = oxaloacetate + NADH + H(+). Functionally, catalyzes the reversible oxidation of malate to oxaloacetate. This chain is Malate dehydrogenase, found in Shewanella loihica (strain ATCC BAA-1088 / PV-4).